Here is a 589-residue protein sequence, read N- to C-terminus: Serine/threonine-protein kinase shk2 (589 aa).

The region spanning 23-125 (GIIRSGWVML…WMDLISSRAL (103 aa)) is the PH domain. The 14-residue stretch at 129–142 (VSSPMNPKHQVHVG) folds into the CRIB domain. One can recognise a Protein kinase domain in the interval 309-566 (FNVKHKLGQG…AAELLTHSFL (258 aa)). ATP is bound by residues 315–323 (LGQGASGSV) and Lys343. Asp434 (proton acceptor) is an active-site residue.

It belongs to the protein kinase superfamily. STE Ser/Thr protein kinase family. STE20 subfamily.

The catalysed reaction is L-seryl-[protein] + ATP = O-phospho-L-seryl-[protein] + ADP + H(+). The enzyme catalyses L-threonyl-[protein] + ATP = O-phospho-L-threonyl-[protein] + ADP + H(+). Forms an activated complex with GTP-bound Ras-like cdc42. Participates in Ras-dependent morphological control and mating response pathways. In Schizosaccharomyces pombe (strain 972 / ATCC 24843) (Fission yeast), this protein is Serine/threonine-protein kinase shk2 (shk2).